Consider the following 257-residue polypeptide: 4-hydroxy-tetrahydrodipicolinate reductase (257 aa).

NAD(+) is bound by residues glycine 8–valine 13, alanine 90–threonine 92, and alanine 114–methionine 117. Histidine 146 (proton donor/acceptor) is an active-site residue. Histidine 147 is a (S)-2,3,4,5-tetrahydrodipicolinate binding site. Lysine 150 (proton donor) is an active-site residue. Residue glycine 156–threonine 157 coordinates (S)-2,3,4,5-tetrahydrodipicolinate.

The protein belongs to the DapB family.

Its subcellular location is the cytoplasm. The catalysed reaction is (S)-2,3,4,5-tetrahydrodipicolinate + NAD(+) + H2O = (2S,4S)-4-hydroxy-2,3,4,5-tetrahydrodipicolinate + NADH + H(+). It catalyses the reaction (S)-2,3,4,5-tetrahydrodipicolinate + NADP(+) + H2O = (2S,4S)-4-hydroxy-2,3,4,5-tetrahydrodipicolinate + NADPH + H(+). Its pathway is amino-acid biosynthesis; L-lysine biosynthesis via DAP pathway; (S)-tetrahydrodipicolinate from L-aspartate: step 4/4. Catalyzes the conversion of 4-hydroxy-tetrahydrodipicolinate (HTPA) to tetrahydrodipicolinate. This is 4-hydroxy-tetrahydrodipicolinate reductase from Aliarcobacter butzleri (strain RM4018) (Arcobacter butzleri).